Consider the following 792-residue polypeptide: Kinesin-associated protein 3 (792 aa).

Ser-60 carries the phosphoserine modification. Over residues 103 to 119 (LSGKEKKEKSSKPKDPP) the composition is skewed to basic and acidic residues. The disordered stretch occupies residues 103–124 (LSGKEKKEKSSKPKDPPPFEGM). ARM repeat units follow at residues 333–373 (FMEN…NLSF), 374–412 (DTGL…HISM), 494–533 (DGPT…NLTI), 578–620 (DDSC…QMVF), and 621–662 (HQAT…IIAE).

Heterotrimer of KIFAP3, KIF3A and KIF3B. Interacts with RAP1GDS1/SMG GDS. Interacts with SMC3 subunit of the cohesin complex. In terms of processing, phosphorylated on tyrosine residues by SRC in vitro; this reduces the binding affinity of the protein for RAP1GDS1.

Its function is as follows. Involved in tethering the chromosomes to the spindle pole and in chromosome movement. Binds to the tail domain of the KIF3A/KIF3B heterodimer to form a heterotrimeric KIF3 complex and may regulate the membrane binding of this complex. This Homo sapiens (Human) protein is Kinesin-associated protein 3 (KIFAP3).